A 420-amino-acid polypeptide reads, in one-letter code: 3-phosphoshikimate 1-carboxyvinyltransferase (420 aa).

The 3-phosphoshikimate site is built by Lys-26, Ser-27, and Arg-31. Lys-26 lines the phosphoenolpyruvate pocket. 2 residues coordinate phosphoenolpyruvate: Gly-97 and Arg-125. The 3-phosphoshikimate site is built by Ser-170, Ser-171, Gln-172, Asp-297, Asn-320, and Lys-324. Gln-172 lines the phosphoenolpyruvate pocket. Asp-297 acts as the Proton acceptor in catalysis. Phosphoenolpyruvate is bound by residues Arg-328, Arg-375, and Lys-400.

This sequence belongs to the EPSP synthase family. In terms of assembly, monomer.

Its subcellular location is the cytoplasm. The catalysed reaction is 3-phosphoshikimate + phosphoenolpyruvate = 5-O-(1-carboxyvinyl)-3-phosphoshikimate + phosphate. Its pathway is metabolic intermediate biosynthesis; chorismate biosynthesis; chorismate from D-erythrose 4-phosphate and phosphoenolpyruvate: step 6/7. Its function is as follows. Catalyzes the transfer of the enolpyruvyl moiety of phosphoenolpyruvate (PEP) to the 5-hydroxyl of shikimate-3-phosphate (S3P) to produce enolpyruvyl shikimate-3-phosphate and inorganic phosphate. The sequence is that of 3-phosphoshikimate 1-carboxyvinyltransferase from Rhizobium leguminosarum bv. trifolii (strain WSM2304).